Reading from the N-terminus, the 241-residue chain is Homeobox protein TGIF2LX (241 aa).

Disordered stretches follow at residues 1 to 56 (MEAA…PKGY) and 115 to 213 (RHGN…EYPD). The segment covering 21-39 (AKTQSPAQDTSTVSRNSAD) has biased composition (polar residues). Positions 48–111 (EHTKKPKGYL…INARRRILPD (64 aa)) form a DNA-binding region, homeobox; TALE-type.

It belongs to the TALE/TGIF homeobox family.

The protein resides in the nucleus. Its function is as follows. May have a transcription role in testis. In Hylobates lar (Lar gibbon), this protein is Homeobox protein TGIF2LX (TGIF2LX).